Reading from the N-terminus, the 103-residue chain is Potassium voltage-gated channel subfamily E member 3 (103 aa).

Asn5, Asn22, and Asn41 each carry an N-linked (GlcNAc...) asparagine glycan. Positions 30-52 (LCRPGPGPGPDNQTEDRRASLPG) are disordered. Residues 57 to 77 (SYMYILFVMFLFAVTVGSLIL) traverse the membrane as a helical segment. The tract at residues 68-79 (FAVTVGSLILGY) is interaction with KCNQ1. At 78 to 103 (GYTRSRKVDKRSDPYHVYIKNRVSMI) the chain is on the cytoplasmic side.

This sequence belongs to the potassium channel KCNE family. Interacts with KCNB1. Interacts with KCNC2. Associates with KCNC4/Kv3.4. Interacts with KCNQ1; associates with a KCNQ1:KCNE3 stoichiometry of 4:4; produces a current with nearly instantaneous activation with a linear current-voltage relationship and alters membrane raft localization; affects KCNQ1 structure and gating properties.

The protein resides in the cell membrane. It localises to the cytoplasm. Its subcellular location is the perikaryon. The protein localises to the cell projection. It is found in the dendrite. The protein resides in the membrane raft. In terms of biological role, ancillary protein that functions as a regulatory subunit of the voltage-gated potassium (Kv) channel complex composed of pore-forming and potassium-conducting alpha subunits and of regulatory beta subunits. KCNE3 beta subunit modulates the gating kinetics and enhances stability of the channel complex. Alters the gating of the delayed rectifier Kv channel containing KCNB1 alpha subunit. Associates with KCNC4/Kv3.4 alpha subunit to form the subthreshold Kv channel in skeletal muscle and to establish the resting membrane potential (RMP) in muscle cells. Association with KCNQ1/KCLQT1 alpha subunit may form the intestinal cAMP-stimulated potassium channel involved in chloride secretion that produces a current with nearly instantaneous activation with a linear current-voltage relationship. This Mus musculus (Mouse) protein is Potassium voltage-gated channel subfamily E member 3.